A 389-amino-acid chain; its full sequence is Choline/ethanolaminephosphotransferase 2 (389 aa).

8 consecutive transmembrane segments (helical) span residues 49–69 (MITLMGFMFLLTSALLGYIYS), 141–161 (TFWFWVISAVPFFGATWEHYF), 176–196 (GLALIYCGHFFTAIVGAEWWA), 220–240 (IILFSMIFFAVIPTLAINTSN), 252–272 (MLLALAMLYPLVTLIAGVLIW), 286–306 (HLVVLGTGLAFGFLVGRMILA), 321–338 (MSLLYLPFALANALTARL), and 350–370 (VLLGYCIFTLSLYAHFATSVI).

This sequence belongs to the CDP-alcohol phosphatidyltransferase class-I family. It depends on Mg(2+) as a cofactor. Mn(2+) serves as cofactor.

The protein resides in the membrane. It catalyses the reaction CDP-ethanolamine + a 1,2-diacyl-sn-glycerol = a 1,2-diacyl-sn-glycero-3-phosphoethanolamine + CMP + H(+). The catalysed reaction is CDP-choline + a 1,2-diacyl-sn-glycerol = a 1,2-diacyl-sn-glycero-3-phosphocholine + CMP + H(+). It functions in the pathway phospholipid metabolism; phosphatidylethanolamine biosynthesis; phosphatidylethanolamine from ethanolamine: step 3/3. The protein operates within phospholipid metabolism; phosphatidylcholine biosynthesis; phosphatidylcholine from phosphocholine: step 2/2. In terms of biological role, catalyzes both phosphatidylcholine and phosphatidylethanolamine biosynthesis from CDP-choline and CDP-ethanolamine, respectively. Has a higher cholinephosphotransferase activity than ethanolaminephosphotransferase activity. In Arabidopsis thaliana (Mouse-ear cress), this protein is Choline/ethanolaminephosphotransferase 2 (AAPT2).